Consider the following 38-residue polypeptide: Photosystem II reaction center protein L (38 aa).

A helical transmembrane segment spans residues 17–37 (SLYWGLLLIFVLAVLFSSYIF).

It belongs to the PsbL family. PSII is composed of 1 copy each of membrane proteins PsbA, PsbB, PsbC, PsbD, PsbE, PsbF, PsbH, PsbI, PsbJ, PsbK, PsbL, PsbM, PsbT, PsbY, PsbZ, Psb30/Ycf12, at least 3 peripheral proteins of the oxygen-evolving complex and a large number of cofactors. It forms dimeric complexes.

The protein localises to the plastid. The protein resides in the chloroplast thylakoid membrane. In terms of biological role, one of the components of the core complex of photosystem II (PSII). PSII is a light-driven water:plastoquinone oxidoreductase that uses light energy to abstract electrons from H(2)O, generating O(2) and a proton gradient subsequently used for ATP formation. It consists of a core antenna complex that captures photons, and an electron transfer chain that converts photonic excitation into a charge separation. This subunit is found at the monomer-monomer interface and is required for correct PSII assembly and/or dimerization. This chain is Photosystem II reaction center protein L, found in Euglena gracilis.